Consider the following 262-residue polypeptide: Spindlin-1 (262 aa).

The interval 1–49 (MKTPFGKTPGQRSRADAGHAGVSANMMKKRTSHKKHRTSVGPSKPVSQP) is disordered. Glycyl lysine isopeptide (Lys-Gly) (interchain with G-Cter in SUMO2) cross-links involve residues K7 and K28. Basic residues predominate over residues 27-38 (MKKRTSHKKHRT). K44 carries the post-translational modification N6-acetyllysine; alternate. K44 is covalently cross-linked (Glycyl lysine isopeptide (Lys-Gly) (interchain with G-Cter in SUMO2); alternate). Residues 53–116 (IVGCRIQHGW…RVSALEVLPD (64 aa)) are tudor-like domain 1. The tract at residues 93-98 (GFDCVY) is histone H3K4me3 and H3R8me2a binding. S109 and S124 each carry phosphoserine; by AURKA. Positions 132–193 (MIGKAVEHMF…DYKEGDLRIM (62 aa)) are tudor-like domain 2. Position 142 (E142) is a region of interest, histone H3K4me3 and H3R8me2a binding. S199 carries the phosphoserine modification. Residues 213 to 262 (LVGKQVEYAKEDGSKRTGMVIHQVEAKPSVYFIKFDDDFHIYVYDLVKTS) form a tudor-like domain 3 region. The histone H3K4me3 and H3R8me2a binding stretch occupies residues 250 to 252 (DFH).

It belongs to the SPIN/STSY family. In terms of assembly, homodimer; may form higher-order oligomers. Interacts with TCF7L2/TCF4; the interaction is direct. Interacts with HABP4 and SERBP1. Interacts with SPINDOC; SPINDOC stabilizes SPIN1 and enhances its association with bivalent H3K4me3K9me3 mark. Interacts with SPOCD1; promoting recruitment of PIWIL4 and SPOCD1 to transposons. Phosphorylated during oocyte meiotic maturation.

The protein localises to the nucleus. The protein resides in the nucleolus. Functionally, chromatin reader that specifically recognizes and binds histone H3 both trimethylated at 'Lys-4' and 'Lys-9' (H3K4me3K9me3) and is involved in piRNA-mediated retrotransposon silencing during spermatogenesis. Plays a key role in the initiation of the PIWIL4-piRNA pathway, a pathway that directs transposon DNA methylation and silencing in the male embryonic germ cells, by promoting recruitment of DNA methylation machinery to transposons: binds young, but not old, LINE1 transposons, which are specifically marked with H3K4me3K9me3, and promotes the recruitment of PIWIL4 and SPOCD1 to transposons, leading to piRNA-directed DNA methylation. Also recognizes and binds histone H3 both trimethylated at 'Lys-4' and asymmetrically dimethylated at 'Arg-8' (H3K4me3 and H3R8me2a) and acts as an activator of Wnt signaling pathway downstream of PRMT2. Overexpression induces metaphase arrest and chromosomal instability. Overexpression induces metaphase arrest and chromosomal instability. Localizes to active rDNA loci and promotes the expression of rRNA genes. May play a role in cell-cycle regulation during the transition from gamete to embryo. Involved in oocyte meiotic resumption, a process that takes place before ovulation to resume meiosis of oocytes blocked in prophase I: may act by regulating maternal transcripts to control meiotic resumption. This Rattus norvegicus (Rat) protein is Spindlin-1 (Spin1).